The primary structure comprises 472 residues: Methanethiol oxidase (472 aa).

This sequence belongs to the selenium-binding protein family.

The protein localises to the nucleus. It localises to the cytoplasm. Its subcellular location is the cytosol. It is found in the membrane. The catalysed reaction is methanethiol + O2 + H2O = hydrogen sulfide + formaldehyde + H2O2 + H(+). It participates in organosulfur degradation. Functionally, catalyzes the oxidation of methanethiol, an organosulfur compound known to be produced in substantial amounts by gut bacteria. Selenium-binding protein which may be involved in the sensing of reactive xenobiotics in the cytoplasm. May be involved in intra-Golgi protein transport. The chain is Methanethiol oxidase (selenbp1) from Xenopus tropicalis (Western clawed frog).